The following is a 451-amino-acid chain: UPF0210 protein NMC1568 (451 aa).

It belongs to the UPF0210 family. In terms of assembly, homodimer.

The protein is UPF0210 protein NMC1568 of Neisseria meningitidis serogroup C / serotype 2a (strain ATCC 700532 / DSM 15464 / FAM18).